Here is a 957-residue protein sequence, read N- to C-terminus: SH3 domain-binding protein 4-B (957 aa).

In terms of domain architecture, SH3 1 spans 54–113 (ENVKEVVAIKDYCPNNFTTLKFSKGEHLYVLDASGGDWWYAHNTTEMGYIPSSYVQPLNY). The 138-residue stretch at 312–449 (TSIVCRLDSS…LEPVMYVVMV (138 aa)) folds into the ZU5 domain. The region spanning 649–719 (TSLKYGKLIK…HAKNVLVVGK (71 aa)) is the SH3 2 domain.

In terms of assembly, homodimer or homooligomer.

It is found in the membrane. The protein resides in the clathrin-coated pit. Its subcellular location is the cytoplasmic vesicle. It localises to the clathrin-coated vesicle. The protein localises to the nucleus. Its function is as follows. Possible role in regulating endocytosis of the transferrin receptor at the plasma membrane. Alternatively, may function as a negative regulator of the amino acid-induced TOR signaling by inhibiting the formation of active Rag GTPase complexes. Preferentially binds inactive Rag GTPase complexes and prevents their interaction with the mTORC1 complex inhibiting its relocalization to lysosomes and its activation. Thereby, may indirectly regulate cell growth, proliferation and autophagy. The protein is SH3 domain-binding protein 4-B (sh3bp4-b) of Xenopus laevis (African clawed frog).